Consider the following 262-residue polypeptide: 3-methyl-2-oxobutanoate hydroxymethyltransferase (262 aa).

Asp42 and Asp81 together coordinate Mg(2+). Residues 42–43 (DS), Asp81, and Lys110 contribute to the 3-methyl-2-oxobutanoate site. Mg(2+) is bound at residue Glu112. The active-site Proton acceptor is the Glu180.

It belongs to the PanB family. In terms of assembly, homodecamer; pentamer of dimers. It depends on Mg(2+) as a cofactor.

Its subcellular location is the cytoplasm. It carries out the reaction 3-methyl-2-oxobutanoate + (6R)-5,10-methylene-5,6,7,8-tetrahydrofolate + H2O = 2-dehydropantoate + (6S)-5,6,7,8-tetrahydrofolate. The protein operates within cofactor biosynthesis; (R)-pantothenate biosynthesis; (R)-pantoate from 3-methyl-2-oxobutanoate: step 1/2. Catalyzes the reversible reaction in which hydroxymethyl group from 5,10-methylenetetrahydrofolate is transferred onto alpha-ketoisovalerate to form ketopantoate. This Legionella pneumophila subsp. pneumophila (strain Philadelphia 1 / ATCC 33152 / DSM 7513) protein is 3-methyl-2-oxobutanoate hydroxymethyltransferase.